An 82-amino-acid polypeptide reads, in one-letter code: ATP synthase subunit c, chloroplastic (82 aa).

The next 2 helical transmembrane spans lie at 4-24 (IISAASVIAAGLAIGLAAIGP) and 57-77 (LAFMEALTIYGLVVALALLFA).

Belongs to the ATPase C chain family. As to quaternary structure, F-type ATPases have 2 components, F(1) - the catalytic core - and F(0) - the membrane proton channel. F(1) has five subunits: alpha(3), beta(3), gamma(1), delta(1), epsilon(1). F(0) has four main subunits: a(1), b(1), b'(1) and c(10-14). The alpha and beta chains form an alternating ring which encloses part of the gamma chain. F(1) is attached to F(0) by a central stalk formed by the gamma and epsilon chains, while a peripheral stalk is formed by the delta, b and b' chains.

The protein resides in the plastid. The protein localises to the chloroplast thylakoid membrane. Its function is as follows. F(1)F(0) ATP synthase produces ATP from ADP in the presence of a proton or sodium gradient. F-type ATPases consist of two structural domains, F(1) containing the extramembraneous catalytic core and F(0) containing the membrane proton channel, linked together by a central stalk and a peripheral stalk. During catalysis, ATP synthesis in the catalytic domain of F(1) is coupled via a rotary mechanism of the central stalk subunits to proton translocation. Functionally, key component of the F(0) channel; it plays a direct role in translocation across the membrane. A homomeric c-ring of between 10-14 subunits forms the central stalk rotor element with the F(1) delta and epsilon subunits. This chain is ATP synthase subunit c, chloroplastic, found in Thalassiosira pseudonana (Marine diatom).